Reading from the N-terminus, the 316-residue chain is Pantothenate kinase (316 aa).

Position 99–106 (Gly-99–Ser-106) interacts with ATP.

Belongs to the prokaryotic pantothenate kinase family.

The protein localises to the cytoplasm. The catalysed reaction is (R)-pantothenate + ATP = (R)-4'-phosphopantothenate + ADP + H(+). Its pathway is cofactor biosynthesis; coenzyme A biosynthesis; CoA from (R)-pantothenate: step 1/5. The chain is Pantothenate kinase (coaA) from Pasteurella multocida (strain Pm70).